Here is a 274-residue protein sequence, read N- to C-terminus: Sulfur carrier protein FdhD (274 aa).

Cys121 acts as the Cysteine persulfide intermediate in catalysis. 258–263 (FSKPGR) is a Mo-bis(molybdopterin guanine dinucleotide) binding site.

This sequence belongs to the FdhD family.

Its subcellular location is the cytoplasm. In terms of biological role, required for formate dehydrogenase (FDH) activity. Acts as a sulfur carrier protein that transfers sulfur from IscS to the molybdenum cofactor prior to its insertion into FDH. The chain is Sulfur carrier protein FdhD from Yersinia pestis bv. Antiqua (strain Antiqua).